Reading from the N-terminus, the 127-residue chain is Cytochrome c2 (127 aa).

A signal peptide spans 1–20 (MRKLVFGLFVLAASVAPAAA). Q21 carries the pyrrolidone carboxylic acid modification. Heme c contacts are provided by C33, C36, H37, and M99.

Belongs to the cytochrome c family. In terms of processing, binds 1 heme c group covalently per subunit.

Cytochrome c2 is found mainly in purple, non-sulfur, photosynthetic bacteria where it functions as the electron donor to the oxidized bacteriochlorophyll in the photophosphorylation pathway. However, it may also have a role in the respiratory chain and is found in some non-photosynthetic bacteria. This is Cytochrome c2 (cycA) from Blastochloris viridis (Rhodopseudomonas viridis).